Consider the following 490-residue polypeptide: 5'-3' exonuclease PLD3 (490 aa).

Over 1–38 the chain is Cytoplasmic; sequence MKPKLMYQELKVPAEEPANELPMNEIEAWKAAEKKARW. Residues 39 to 59 traverse the membrane as a helical; Signal-anchor for type II membrane protein segment; it reads VLLVLILAVVGFGALMTQLFL. Topologically, residues 60–490 are lumenal; it reads WEYGDLHLFG…DSVGNACRLL (431 aa). Disulfide bonds link Cys77–Cys239 and Cys81–Cys237. Residues Asn97 and Asn132 are each glycosylated (N-linked (GlcNAc...) asparagine). Residues 196–223 enclose the PLD phosphodiesterase 1 domain; the sequence is THGVLHTKFWVVDQTHFYLGSANMDWRS. Residues His201, Lys203, and Asp208 contribute to the active site. His201 (proton donor) is an active-site residue. His201 and Lys203 together coordinate phosphate. Residue Asn218 participates in phosphate binding. N-linked (GlcNAc...) asparagine glycans are attached at residues Asn236, Asn284, and Asn387. The cysteines at positions 366 and 487 are disulfide-linked. Residues 411–437 form the PLD phosphodiesterase 2 domain; it reads YARVNHNKYMVTERATYIGTSNWSGNY. His416 contributes to the phosphate binding site. The Nucleophile role is filled by His416. Residue Phe438 participates in Mg(2+) binding.

Belongs to the phospholipase D family. As to quaternary structure, homodimer. Interacts with APP. N-glycosylated. In terms of processing, proteolytically processed to a soluble form that is stable within endosomes and lysosomes. During transport through the secretory pathway becomes proteolysed by cysteine proteases, thereby releasing a stable soluble lysosomal lumenal polypeptide, whereas the transmembrane-bound fragment is rapidly degraded. Its transport route to lysosomes involves ubiquitination and the ESCRT complex. Post-translationally, ubiquitinated. Ubiquitination mediates sorting into lysosomes.

It localises to the endoplasmic reticulum membrane. The protein resides in the lysosome lumen. It is found in the early endosome membrane. Its subcellular location is the late endosome membrane. The protein localises to the golgi apparatus membrane. It localises to the endosome membrane. The enzyme catalyses Exonucleolytic cleavage in the 5'- to 3'-direction to yield nucleoside 3'-phosphates.. The catalysed reaction is a 5'-end 5'-dephospho-ribonucleotidyl-ribonucleotide-RNA + H2O = a ribonucleoside 3'-phosphate + a 5'-end dephospho-ribonucleoside-RNA + H(+). It catalyses the reaction a ribonucleoside 3'-phosphate-2'-3'-cyclophospho-GMP + H2O = a ribonucleoside 3'-phosphate + 2',3'-cyclophospho-GMP + H(+). It carries out the reaction a 5'-end 5'-dephospho-2'-deoxyribonucleotidyl-2'-deoxyribonucleotide in single-stranded DNA + H2O = a 5'-end dephospho-2'-deoxyribonucleoside in single-stranded DNA + a 2'-deoxyribonucleoside 3'-phosphate + H(+). The enzyme catalyses a 5'-end 5'-phospho-2'-deoxyribonucleotide in single-stranded DNA + H2O = a 5'-end 5'-dephospho-2'-deoxyribonucleotide in single-stranded DNA + phosphate. The catalysed reaction is a 3-lyso-sn-glycero-1-phospho-(3'-acyl-1'-sn-glycerol) + a 1-acyl-sn-glycerol = a 3-acyl-sn-glycero-1-phospho-(3'-acyl-1'-sn-glycerol) + glycerol. It catalyses the reaction 3-lyso-sn-glycero-1-phospho-(3'-(9Z-octadecenoyl)-1'-sn-glycerol) + 1-(9Z-octadecenoyl)-sn-glycerol = 3-(9Z-octadecenoyl)-sn-glycero-1-phospho-(3'-(9Z-octadecenoyl)-1'-sn-glycerol) + glycerol. Functionally, 5'-&gt;3' exonuclease that hydrolyzes the phosphodiester bond of single-stranded DNA (ssDNA) and RNA molecules to form nucleoside 3'-monophosphates and 5'-end 5'-hydroxy deoxyribonucleotide/ribonucleotide fragments. Partially redundant with PLD4, can cleave all four nucleotides displaying higher efficiency for ssDNA and RNA fragments initiated with uridine and guanosine residues and lower efficiency for cytidine-initiated substrates. As a result, it does not always degrade polynucleotides to the single nucleotide level, it can stall at specific sites sparing certain fragments from exonucleolytic degradation. Processes self and pathogenic ssDNA and RNA molecules that reach the endolysosomal compartment via phagocytosis or autophagy and may serve as 'danger' signals for recognition by innate immune receptors such as toll-like receptors (TLRs). Degrades mitochondrial CpG-rich ssDNA fragments to prevent TLR9 activation and autoinflammatory response, but it can cleave viral RNA to generate ligands for TLR7 activation and initiate antiviral immune responses. In plasmacytoid dendritic cells, it cooperates with endonuclease RNASET2 to release 2',3'-cyclic guanosine monophosphate (2',3'-cGMP), a potent stimulatory ligand for TLR7. Produces 2',3'-cGMPs and cytidine-rich RNA fragments that occupy TLR7 ligand-binding pockets and trigger a signaling-competent state. Can exert polynucleotide phosphatase activity toward 5'-phosphorylated ssDNA substrates although at a slow rate. Transphosphatidylase that catalyzes the exchange with R to S stereo-inversion of the glycerol moiety between (S,R)-lysophosphatidylglycerol (LPG) and monoacylglycerol (MAG) substrates to yield (S,S)-bis(monoacylglycero)phosphate (BMP). Can synthesize a variety of (S,S)-BMPs representing the main phospholipid constituent of lysosomal intralumenal vesicle (ILV) membranes that bind acid hydrolases for lipid degradation. Regulates the homeostasis and interorganellar communication of the endolysosomal system with an overall impact on cellular removal of dysfunctional organelles via autophagy as well as proper protein and lipid turnover. May play a role in myotube formation in response to ER stress. In Pongo abelii (Sumatran orangutan), this protein is 5'-3' exonuclease PLD3 (PLD3).